Here is a 284-residue protein sequence, read N- to C-terminus: Bifunctional protein FolD (284 aa).

166-168 is a binding site for NADP(+); sequence GAS.

The protein belongs to the tetrahydrofolate dehydrogenase/cyclohydrolase family. As to quaternary structure, homodimer.

The enzyme catalyses (6R)-5,10-methylene-5,6,7,8-tetrahydrofolate + NADP(+) = (6R)-5,10-methenyltetrahydrofolate + NADPH. It carries out the reaction (6R)-5,10-methenyltetrahydrofolate + H2O = (6R)-10-formyltetrahydrofolate + H(+). It participates in one-carbon metabolism; tetrahydrofolate interconversion. Catalyzes the oxidation of 5,10-methylenetetrahydrofolate to 5,10-methenyltetrahydrofolate and then the hydrolysis of 5,10-methenyltetrahydrofolate to 10-formyltetrahydrofolate. The chain is Bifunctional protein FolD from Legionella pneumophila subsp. pneumophila (strain Philadelphia 1 / ATCC 33152 / DSM 7513).